Reading from the N-terminus, the 118-residue chain is Nucleoid-associated protein CTN_1899 (118 aa).

This sequence belongs to the YbaB/EbfC family. Homodimer.

It is found in the cytoplasm. Its subcellular location is the nucleoid. Functionally, binds to DNA and alters its conformation. May be involved in regulation of gene expression, nucleoid organization and DNA protection. This Thermotoga neapolitana (strain ATCC 49049 / DSM 4359 / NBRC 107923 / NS-E) protein is Nucleoid-associated protein CTN_1899.